The chain runs to 828 residues: DNA gyrase subunit A (828 aa).

The region spanning 32–497 is the Topo IIA-type catalytic domain; sequence LPDVRDGLKP…EVLSLEDEDL (466 aa). Tyr120 acts as the O-(5'-phospho-DNA)-tyrosine intermediate in catalysis. The GyrA-box signature appears at 524–530; sequence QKRGGRG.

Belongs to the type II topoisomerase GyrA/ParC subunit family. In terms of assembly, heterotetramer, composed of two GyrA and two GyrB chains. In the heterotetramer, GyrA contains the active site tyrosine that forms a transient covalent intermediate with DNA, while GyrB binds cofactors and catalyzes ATP hydrolysis.

It is found in the cytoplasm. The catalysed reaction is ATP-dependent breakage, passage and rejoining of double-stranded DNA.. Its function is as follows. A type II topoisomerase that negatively supercoils closed circular double-stranded (ds) DNA in an ATP-dependent manner to modulate DNA topology and maintain chromosomes in an underwound state. Negative supercoiling favors strand separation, and DNA replication, transcription, recombination and repair, all of which involve strand separation. Also able to catalyze the interconversion of other topological isomers of dsDNA rings, including catenanes and knotted rings. Type II topoisomerases break and join 2 DNA strands simultaneously in an ATP-dependent manner. This chain is DNA gyrase subunit A, found in Streptococcus pyogenes serotype M1.